The sequence spans 605 residues: Elongation factor 4 (605 aa).

Residues 9 to 192 (SRTRNFCIIA…AIIARIPSPK (184 aa)) form the tr-type G domain. Residues 21 to 26 (DHGKST) and 139 to 142 (NKID) each bind GTP.

The protein belongs to the TRAFAC class translation factor GTPase superfamily. Classic translation factor GTPase family. LepA subfamily.

Its subcellular location is the cell inner membrane. The catalysed reaction is GTP + H2O = GDP + phosphate + H(+). Required for accurate and efficient protein synthesis under certain stress conditions. May act as a fidelity factor of the translation reaction, by catalyzing a one-codon backward translocation of tRNAs on improperly translocated ribosomes. Back-translocation proceeds from a post-translocation (POST) complex to a pre-translocation (PRE) complex, thus giving elongation factor G a second chance to translocate the tRNAs correctly. Binds to ribosomes in a GTP-dependent manner. The chain is Elongation factor 4 from Chlorobium limicola (strain DSM 245 / NBRC 103803 / 6330).